Here is a 151-residue protein sequence, read N- to C-terminus: Mini-ribonuclease 3 (151 aa).

The active site involves Asp-30.

This sequence belongs to the MrnC RNase family. In terms of assembly, homodimer. The cofactor is Mg(2+).

It localises to the cytoplasm. Functionally, involved in correct processing of both the 5' and 3' ends of 23S rRNA precursor. Processes 30S rRNA precursor transcript even in absence of ribonuclease 3 (Rnc); Rnc processes 30S rRNA into smaller rRNA precursors. This Thermosynechococcus vestitus (strain NIES-2133 / IAM M-273 / BP-1) protein is Mini-ribonuclease 3.